Consider the following 459-residue polypeptide: U-box domain-containing protein 75 (459 aa).

The U-box domain maps to 64–138; the sequence is AVPAVFICPI…AAWFSRRYTR (75 aa). ARM repeat units lie at residues 188–229 and 231–270; these read QSVT…GVPL and ADAK…ILME.

In terms of assembly, interacts with GPA1. In terms of tissue distribution, expressed highly in panicles at flowering time, at moderate levels in vegetative shoot apices, leaf sheaths, leaf blades, and elongating internodes, and at low levels in roots.

Its subcellular location is the cell membrane. It carries out the reaction S-ubiquitinyl-[E2 ubiquitin-conjugating enzyme]-L-cysteine + [acceptor protein]-L-lysine = [E2 ubiquitin-conjugating enzyme]-L-cysteine + N(6)-ubiquitinyl-[acceptor protein]-L-lysine.. The protein operates within protein modification; protein ubiquitination. Functionally, E3 ubiquitin ligase that may function as positive regulator of brassinosteroid (BR) signaling. Possesses E3 ubiquitin ligase in vitro. Acts together with the heterotrimeric G alpha subunit GPA1 at the plasma membrane to mediate a BR signaling pathway that affects plant growth and development. Does not seem to be involved in gibberellin or cytokinin responses. The protein is U-box domain-containing protein 75 of Oryza sativa subsp. japonica (Rice).